Consider the following 327-residue polypeptide: Endo-1,4-beta-xylanase C (327 aa).

An N-terminal signal peptide occupies residues 1–15 (MKFSSLLFTASLVAA). The GH10 domain occupies 43 to 325 (TITDPNLLQS…KPAYTAVVNA (283 aa)). The Proton donor role is filled by E154. E262 functions as the Nucleophile in the catalytic mechanism. A disulfide bond links C280 and C286.

The protein belongs to the glycosyl hydrolase 10 (cellulase F) family.

The protein resides in the secreted. It carries out the reaction Endohydrolysis of (1-&gt;4)-beta-D-xylosidic linkages in xylans.. Its pathway is glycan degradation; xylan degradation. Weakly inhibited by the wheat xylanase inhibiting protein I (XIP-I). In terms of biological role, endo-1,4-beta-xylanase involved in the hydrolysis of xylan, a major structural heterogeneous polysaccharide found in plant biomass representing the second most abundant polysaccharide in the biosphere, after cellulose. Plays an important role in causing fusarium head blight (FHB) on cereal crops. In Gibberella zeae (strain ATCC MYA-4620 / CBS 123657 / FGSC 9075 / NRRL 31084 / PH-1) (Wheat head blight fungus), this protein is Endo-1,4-beta-xylanase C (XYLC).